Consider the following 553-residue polypeptide: Hydroxylamine reductase (553 aa).

Residues C3, C6, C18, and C25 each coordinate [2Fe-2S] cluster. Hybrid [4Fe-2O-2S] cluster-binding residues include H252, E276, C320, C408, C436, C461, E495, and K497. Residue C408 is modified to Cysteine persulfide.

Belongs to the HCP family. The cofactor is [2Fe-2S] cluster. Hybrid [4Fe-2O-2S] cluster is required as a cofactor.

The protein resides in the cytoplasm. The enzyme catalyses A + NH4(+) + H2O = hydroxylamine + AH2 + H(+). In terms of biological role, catalyzes the reduction of hydroxylamine to form NH(3) and H(2)O. The polypeptide is Hydroxylamine reductase (Aliivibrio fischeri (strain ATCC 700601 / ES114) (Vibrio fischeri)).